Consider the following 407-residue polypeptide: Na(+)-translocating NADH-quinone reductase subunit F (407 aa).

The chain crosses the membrane as a helical span at residues 3-23; the sequence is IILGVVMFTLIVLALVLVILF. The 95-residue stretch at 32 to 126 folds into the 2Fe-2S ferredoxin-type domain; sequence GDITISVNGD…DMDIELPEEI (95 aa). Residues cysteine 69, cysteine 75, cysteine 78, and cysteine 110 each contribute to the [2Fe-2S] cluster site. The region spanning 129–269 is the FAD-binding FR-type domain; that stretch reads VKKWECTVIS…SGPFGEFFAK (141 aa). The tract at residues 272-389 is catalytic; sequence DAEMVFIGGG…PMMNAAVIGM (118 aa).

It belongs to the NqrF family. Composed of six subunits; NqrA, NqrB, NqrC, NqrD, NqrE and NqrF. It depends on [2Fe-2S] cluster as a cofactor. The cofactor is FAD.

The protein localises to the cell inner membrane. The catalysed reaction is a ubiquinone + n Na(+)(in) + NADH + H(+) = a ubiquinol + n Na(+)(out) + NAD(+). Functionally, NQR complex catalyzes the reduction of ubiquinone-1 to ubiquinol by two successive reactions, coupled with the transport of Na(+) ions from the cytoplasm to the periplasm. The first step is catalyzed by NqrF, which accepts electrons from NADH and reduces ubiquinone-1 to ubisemiquinone by a one-electron transfer pathway. This chain is Na(+)-translocating NADH-quinone reductase subunit F, found in Vibrio parahaemolyticus serotype O3:K6 (strain RIMD 2210633).